The primary structure comprises 423 residues: Probable sucrose-phosphatase 3b (423 aa).

It belongs to the sucrose phosphatase family. In terms of assembly, homodimer. It depends on Mg(2+) as a cofactor.

It carries out the reaction sucrose 6(F)-phosphate + H2O = sucrose + phosphate. The protein operates within glycan biosynthesis; sucrose biosynthesis; sucrose from D-fructose 6-phosphate and UDP-alpha-D-glucose: step 2/2. Functionally, catalyzes the final step of sucrose synthesis. The sequence is that of Probable sucrose-phosphatase 3b (SPP3B) from Arabidopsis thaliana (Mouse-ear cress).